We begin with the raw amino-acid sequence, 787 residues long: MEPAGERFPEQRQVLILLLLLEVTLAGWEPRRYSVMEETERGSFVANLANDLGLGVGELAERGARVVSEDNEQGLQLDLQTGQLILNEKLDREKLCGPTEPCIMHFQVLLKKPLEVIRAELLVTDINDHSPEFPEREITLKIPETSSLGTVFPLKKARDLDVGSNNVQNYNISPNSHFHVSTRTRGDGRKYPELVLDTELDREEQAELRLTLTAVDGGSPPRSGTVQILILVLDANDNAPEFAQALYEVQVPENSPVGSLVVKVSARDLDTGTNGEISYSLYYSSEEINKPFELSSLSGEIRLIKKLDFETMSSYDLDIEASDGGGLSGKCSVSVKVLDVNDNFPELSISSLTSPIPENSPETEVALFRIRDRDSGENGKMICSIQDDVPFKLKPSVENFYRLVTEGALDRETRAEYNITITITDLGTPRLKTQHNITVLVSDVNDNAPAFTQTSYTLFVRENNSPALHIGSVSATDRDSGTNAQVTYSLLPPQDPHLPLASLVSINTDNGHLFALRSLDYEALQAFEFHVGATDRGSPALSSEALVRVLVLDANDNSPFVLYPLQNGSAPCTELVPRAAEPGYVVTKVVAVDGDSGQNAWLSYQLLKATEPGLFGVWAHNGEVRTARLLSERDVAKHRLVVLVKDNGEPPRSATATLQVLLVDGFSQPYLPLPEAAPAQAQADSLTVYLVVALASVSSLFLFSVLLFVAVRLCRRSRAASVGRYSVPEGPFPGHRVDVSGTGTLSQSYQYEVCLTGGSESNDFKFLKPIFPNIVSQDSRRKSEFLE.

Residues 1 to 26 form the signal peptide; sequence MEPAGERFPEQRQVLILLLLLEVTLA. Over 27-690 the chain is Extracellular; the sequence is GWEPRRYSVM…AQADSLTVYL (664 aa). 5 Cadherin domains span residues 35–133, 138–242, 247–347, 352–451, and 456–561; these read VMEE…SPEF, ITLK…APEF, YEVQ…FPEL, LTSP…APAF, and YTLF…SPFV. Residues asparagine 418 and asparagine 436 are each glycosylated (N-linked (GlcNAc...) asparagine). Asparagine 567 carries N-linked (GlcNAc...) asparagine glycosylation. A Cadherin 6 domain is found at 568–671; the sequence is GSAPCTELVP…LVDGFSQPYL (104 aa). The chain crosses the membrane as a helical span at residues 691 to 711; that stretch reads VVALASVSSLFLFSVLLFVAV. The Cytoplasmic portion of the chain corresponds to 712-787; sequence RLCRRSRAAS…DSRRKSEFLE (76 aa).

It localises to the cell membrane. Functionally, potential calcium-dependent cell-adhesion protein. May be involved in the establishment and maintenance of specific neuronal connections in the brain. This Pan troglodytes (Chimpanzee) protein is Protocadherin beta-15 (PCDHB15).